The sequence spans 24 residues: Carboxypeptidase 1 (24 aa).

Residues asparagine 3 and asparagine 11 are each glycosylated (N-linked (GlcNAc...) asparagine).

The protein belongs to the peptidase S10 family. Monomer. Contains both N- and O-linked sugar chains. The N-linked oligosaccharides are unique structures of Man(10)GlcNAc(2) and Man(11)GlcNAc(2). Deglycosylation does neither affect catalytic activity, pH, thermal stability, or resistance to proteolysis of the enzyme.

It is found in the secreted. With respect to regulation, inhibited by DFP. Removes acidic, neutral and basic amino acids as well as proline from the C-terminal position. Digests preferentially peptides containing a hydrophobic residue in P1' position, as well as arginine, lysine or phenylalanine in P1 position of ester substrate. Catalyzes also peptide synthesis. This chain is Carboxypeptidase 1, found in Aspergillus niger.